Reading from the N-terminus, the 623-residue chain is Peptidoglycan D,D-transpeptidase MrdA (623 aa).

A helical membrane pass occupies residues 17–37 (VIVAFGVVVVCFGILIFNLYN). Ser-326 (acyl-ester intermediate) is an active-site residue.

This sequence belongs to the transpeptidase family. MrdA subfamily.

It is found in the cell inner membrane. The enzyme catalyses Preferential cleavage: (Ac)2-L-Lys-D-Ala-|-D-Ala. Also transpeptidation of peptidyl-alanyl moieties that are N-acyl substituents of D-alanine.. It functions in the pathway cell wall biogenesis; peptidoglycan biosynthesis. Its function is as follows. Catalyzes cross-linking of the peptidoglycan cell wall. This is Peptidoglycan D,D-transpeptidase MrdA from Salmonella typhimurium (strain SL1344).